The sequence spans 181 residues: MSAARESHPHGVKRSASPDDDLGSSNWEAADLGNEERKQKFLRLMGAGKKEHTGRLVIGDHKSTSHFRTGEEDKKINEELESQYQQSMDSKLSGRYRRHCGLGFSEVDDHDGEGDVAGDDDDDDSPDPESPDDSESDSESEKEESTEELQAAEHPDEVEDSKNKKDAKSNYKMMFVKSSGS.

The interval 1–181 is disordered; it reads MSAARESHPH…KMMFVKSSGS (181 aa). Residue Lys-13 forms a Glycyl lysine isopeptide (Lys-Gly) (interchain with G-Cter in SUMO2) linkage. 2 positions are modified to phosphoserine: Ser-15 and Ser-17. Basic and acidic residues predominate over residues 48-78; the sequence is GKKEHTGRLVIGDHKSTSHFRTGEEDKKINE. A Glycyl lysine isopeptide (Lys-Gly) (interchain with G-Cter in SUMO2) cross-link involves residue Lys-62. The residue at position 63 (Ser-63) is a Phosphoserine. Residue Lys-75 forms a Glycyl lysine isopeptide (Lys-Gly) (interchain with G-Cter in SUMO2) linkage. Residues Ser-87, Ser-125, and Ser-145 each carry the phosphoserine modification. The span at 106–147 shows a compositional bias: acidic residues; the sequence is EVDDHDGEGDVAGDDDDDDSPDPESPDDSESDSESEKEESTE. Basic and acidic residues predominate over residues 151–169; sequence AAEHPDEVEDSKNKKDAKS. Lys-172 and Lys-177 each carry N6-acetyllysine.

Belongs to the SMAP family.

In Bos taurus (Bovine), this protein is Small acidic protein (SMAP).